We begin with the raw amino-acid sequence, 192 residues long: Ribosome maturation factor RimM (192 aa).

The 77-residue stretch at 116–192 (PGEYYWVDLI…RIIVDWQPDY (77 aa)) folds into the PRC barrel domain.

The protein belongs to the RimM family. In terms of assembly, binds ribosomal protein uS19.

It localises to the cytoplasm. Functionally, an accessory protein needed during the final step in the assembly of 30S ribosomal subunit, possibly for assembly of the head region. Essential for efficient processing of 16S rRNA. May be needed both before and after RbfA during the maturation of 16S rRNA. It has affinity for free ribosomal 30S subunits but not for 70S ribosomes. The polypeptide is Ribosome maturation factor RimM (Verminephrobacter eiseniae (strain EF01-2)).